The following is a 65-amino-acid chain: Prokaryotic ubiquitin-like protein Pup (65 aa).

The interval 1-38 (MANAQQQVFGGGGGDDAENNDAPQQGSGTQQVNVTGTD) is disordered. The tract at residues 21 to 59 (DAPQQGSGTQQVNVTGTDDLLDEIDGLLETNAEEFVRSY) is ARC ATPase binding. Residues 22-34 (APQQGSGTQQVNV) show a composition bias toward polar residues. Deamidated glutamine is present on glutamine 65. Residue glutamine 65 forms an Isoglutamyl lysine isopeptide (Gln-Lys) (interchain with K-? in acceptor proteins) linkage.

The protein belongs to the prokaryotic ubiquitin-like protein family. Strongly interacts with the proteasome-associated ATPase ARC through a hydrophobic interface; the interacting region of Pup lies in its C-terminal half. There is one Pup binding site per ARC hexamer ring. Post-translationally, is modified by deamidation of its C-terminal glutamine to glutamate by the deamidase Dop, a prerequisite to the subsequent pupylation process.

It participates in protein degradation; proteasomal Pup-dependent pathway. Its function is as follows. Protein modifier that is covalently attached to lysine residues of substrate proteins, thereby targeting them for proteasomal degradation. The tagging system is termed pupylation. This Corynebacterium urealyticum (strain ATCC 43042 / DSM 7109) protein is Prokaryotic ubiquitin-like protein Pup.